Reading from the N-terminus, the 193-residue chain is Pyridoxal 5'-phosphate synthase subunit PdxT (193 aa).

48–50 provides a ligand contact to L-glutamine; that stretch reads GES. Cys-80 acts as the Nucleophile in catalysis. L-glutamine contacts are provided by residues Arg-109 and 137–138; that span reads IR. Catalysis depends on charge relay system residues His-173 and Glu-175.

This sequence belongs to the glutaminase PdxT/SNO family. In terms of assembly, in the presence of PdxS, forms a dodecamer of heterodimers. Only shows activity in the heterodimer.

It carries out the reaction aldehydo-D-ribose 5-phosphate + D-glyceraldehyde 3-phosphate + L-glutamine = pyridoxal 5'-phosphate + L-glutamate + phosphate + 3 H2O + H(+). The enzyme catalyses L-glutamine + H2O = L-glutamate + NH4(+). Its pathway is cofactor biosynthesis; pyridoxal 5'-phosphate biosynthesis. In terms of biological role, catalyzes the hydrolysis of glutamine to glutamate and ammonia as part of the biosynthesis of pyridoxal 5'-phosphate. The resulting ammonia molecule is channeled to the active site of PdxS. The polypeptide is Pyridoxal 5'-phosphate synthase subunit PdxT (Mycobacteroides abscessus (strain ATCC 19977 / DSM 44196 / CCUG 20993 / CIP 104536 / JCM 13569 / NCTC 13031 / TMC 1543 / L948) (Mycobacterium abscessus)).